Here is a 471-residue protein sequence, read N- to C-terminus: Major facilitator-type transporter psiT1 (471 aa).

The segment at 1-36 (MNPTTATDAHERTSLLSGRPQSAANSTAPYERQVQP) is disordered. Polar residues predominate over residues 14–36 (SLLSGRPQSAANSTAPYERQVQP). Asn-25 carries an N-linked (GlcNAc...) asparagine glycan. Transmembrane regions (helical) follow at residues 44–64 (TPVT…TMVI), 108–128 (AIMV…GTGI), 140–160 (PVLM…LTVQ), 168–188 (LVTF…TTVF), 212–232 (GWLV…TTFL), 237–257 (AVYI…AFVL), 322–342 (LHSF…LIFF), and 356–376 (VMTT…PLFI). A glycan (N-linked (GlcNAc...) asparagine) is linked at Asn-384. Residues 424-444 (VHITVISWTIESLAYIVLGTV) form a helical membrane-spanning segment.

This sequence belongs to the major facilitator superfamily. TCR/Tet family.

It is found in the membrane. In terms of biological role, major facilitator-type transporter; part of the gene cluster that mediates the biosynthesis of psilocybin, a psychotropic tryptamine-derived natural product. This Psilocybe cyanescens protein is Major facilitator-type transporter psiT1.